We begin with the raw amino-acid sequence, 612 residues long: Baculoviral IAP repeat-containing protein 2 (612 aa).

The stretch at 46–113 (ELYRMSTYSA…RQFYPSCSFV (68 aa)) is one BIR 1 repeat. Residue arginine 143 is modified to Omega-N-methylarginine. Serine 153 carries the post-translational modification Phosphoserine. BIR repeat units lie at residues 177–243 (EEAR…CPFL) and 262–329 (HSAR…CEFL). Positions 299, 302, 319, and 326 each coordinate Zn(2+). The CARD domain occupies 447–537 (MASGDLSLIR…TLYENLFVEK (91 aa)). The segment at 565–600 (CKVCMDREVSIVFIPCGHLVVCQECAPSLRKCPICR) adopts an RING-type zinc-finger fold.

The protein belongs to the IAP family. Interacts with DIABLO/SMAC and with PRSS25; these interactions inhibit apoptotic suppressor activity. Interacts with CASP9. Interacts (via BIR domains) with TRAF2; the interaction is required for IKBKE ubiquitination. Interacts with E2F1, RIPK1, RIPK2, RIPK3, RIPK4, BIRC5/survivin and USP19. Interacts with HSP90AB1. Interacts with several death receptors, inclusing FAS, TNFRSF10A and TNFRSF10B. Recruited to TNFRSF10B in the absence of receptor stimulation. When TNFRSF10B is stimulated, further recruited to the receptor and cleaved by caspases. Proteolytic fragments remain associated with TNFRSF10B. In terms of processing, auto-ubiquitinated and degraded by the proteasome in apoptotic cells. Upon stimulation of death receptors, including TNFRSF10B, recruited to receptors and cleaved by caspases. Proteolytic fragments remain associated with the receptors. This cleavage presumably inactivates the protein. In terms of tissue distribution, expressed in heart, brain, spleen, lung, liver, skeletal muscle, kidney and testis.

The protein resides in the cytoplasm. It localises to the nucleus. The enzyme catalyses S-ubiquitinyl-[E2 ubiquitin-conjugating enzyme]-L-cysteine + [acceptor protein]-L-lysine = [E2 ubiquitin-conjugating enzyme]-L-cysteine + N(6)-ubiquitinyl-[acceptor protein]-L-lysine.. With respect to regulation, the CARD domain inhibits the activation of E3 ubiquitin ligase activity by preventing RING domain dimerization and E2 ubiquitin donor binding and activation. The CARD domain-mediated autoinhibition of the E3 ubiquitin-protein ligase activity suppresses cell proliferation and migration. USP19 regulates the stability of BIRC2/c-IAP1 by preventing its ubiquitination. In terms of biological role, multi-functional protein which regulates not only caspases and apoptosis, but also modulates inflammatory signaling and immunity, mitogenic kinase signaling, and cell proliferation, as well as cell invasion and metastasis. Acts as an E3 ubiquitin-protein ligase regulating NF-kappa-B signaling and regulates both canonical and non-canonical NF-kappa-B signaling by acting in opposite directions: acts as a positive regulator of the canonical pathway and suppresses constitutive activation of non-canonical NF-kappa-B signaling. The target proteins for its E3 ubiquitin-protein ligase activity include: RIPK1, RIPK2, RIPK3, RIPK4, CASP3, CASP7, CASP8, TRAF2, DIABLO/SMAC, MAP3K14/NIK, MAP3K5/ASK1, IKBKG/NEMO, IKBKE and MXD1/MAD1. Can also function as an E3 ubiquitin-protein ligase of the NEDD8 conjugation pathway, targeting effector caspases for neddylation and inactivation. Acts as an important regulator of innate immune signaling via regulation of Toll-like receptors (TLRs), Nodlike receptors (NLRs) and RIG-I like receptors (RLRs), collectively referred to as pattern recognition receptors (PRRs). Protects cells from spontaneous formation of the ripoptosome, a large multi-protein complex that has the capability to kill cancer cells in a caspase-dependent and caspase-independent manner. Suppresses ripoptosome formation by ubiquitinating RIPK1 and CASP8. Can stimulate the transcriptional activity of E2F1. Plays a role in the modulation of the cell cycle. This chain is Baculoviral IAP repeat-containing protein 2 (Birc2), found in Mus musculus (Mouse).